A 350-amino-acid polypeptide reads, in one-letter code: Biotin synthase (350 aa).

Residues 63-281 (GDIELATLLS…IAVARITMPK (219 aa)) form the Radical SAM core domain. Residues Cys-78, Cys-82, and Cys-85 each coordinate [4Fe-4S] cluster. Cys-122, Cys-153, Cys-213, and Arg-285 together coordinate [2Fe-2S] cluster.

The protein belongs to the radical SAM superfamily. Biotin synthase family. In terms of assembly, homodimer. It depends on [4Fe-4S] cluster as a cofactor. Requires [2Fe-2S] cluster as cofactor.

It catalyses the reaction (4R,5S)-dethiobiotin + (sulfur carrier)-SH + 2 reduced [2Fe-2S]-[ferredoxin] + 2 S-adenosyl-L-methionine = (sulfur carrier)-H + biotin + 2 5'-deoxyadenosine + 2 L-methionine + 2 oxidized [2Fe-2S]-[ferredoxin]. It participates in cofactor biosynthesis; biotin biosynthesis; biotin from 7,8-diaminononanoate: step 2/2. In terms of biological role, catalyzes the conversion of dethiobiotin (DTB) to biotin by the insertion of a sulfur atom into dethiobiotin via a radical-based mechanism. The chain is Biotin synthase from Acidovorax ebreus (strain TPSY) (Diaphorobacter sp. (strain TPSY)).